We begin with the raw amino-acid sequence, 687 residues long: Complement C1s subcomponent (687 aa).

Residues 1-15 (MWCIVLLSLLAWVDA) form the signal peptide. The 115-residue stretch at 16 to 130 (EPTMYGEILS…TGFAAYYVAV (115 aa)) folds into the CUB 1 domain. The Ca(2+) site is built by Glu-60, Asp-68, Asp-113, Asp-131, Val-132, and Glu-134. Cys-65 and Cys-83 form a disulfide bridge. The 42-residue stretch at 131 to 172 (DVNECTDFADSPCSHFCNNYIGGYFCSCPPEYFLHEDKKNCG) folds into the EGF-like; calcium-binding domain. 3 cysteine pairs are disulfide-bonded: Cys-135–Cys-147, Cys-143–Cys-156, and Cys-158–Cys-171. Residues Asn-149, Tyr-150, and Gly-153 each coordinate Ca(2+). Asn-149 is modified ((3R)-3-hydroxyasparagine). Residue Asn-174 is glycosylated (N-linked (GlcNAc...) asparagine). 9 cysteine pairs are disulfide-bonded: Cys-175–Cys-202, Cys-234–Cys-251, Cys-294–Cys-341, Cys-321–Cys-354, Cys-359–Cys-403, Cys-386–Cys-421, Cys-425–Cys-548, Cys-594–Cys-617, and Cys-626–Cys-658. Residues 175 to 290 (CSGDVFTTLI…KGWKFRYHGD (116 aa)) form the CUB 2 domain. Sushi domains lie at 292 to 356 (IPCP…RCQP) and 357 to 423 (VDCG…KCVP). A glycan (N-linked (GlcNAc...) asparagine) is linked at Asn-406. The Peptidase S1 domain occupies 438-679 (IFGGIITKIE…YIDWIRETMQ (242 aa)). Catalysis depends on charge relay system residues His-475 and Asp-528. The active-site Charge relay system is the Ser-630.

It belongs to the peptidase S1 family. C1 is a calcium-dependent trimolecular complex of C1q, C1r and C1s in the molar ration of 1:2:2. Activated C1s is an disulfide-linked heterodimer of a heavy chain and a light chain. The iron and 2-oxoglutarate dependent 3-hydroxylation of aspartate and asparagine is (R) stereospecific within EGF domains.

The enzyme catalyses Cleavage of Arg-|-Ala bond in complement component C4 to form C4a and C4b, and Lys(or Arg)-|-Lys bond in complement component C2 to form C2a and C2b: the 'classical' pathway C3 convertase.. With respect to regulation, inhibited by SERPING1. In terms of biological role, C1s B chain is a serine protease that combines with C1q and C1r to form C1, the first component of the classical pathway of the complement system. C1r activates C1s so that it can, in turn, activate C2 and C4. Also cleaves IGFBP5 and thereby inhibits the trophic effects of IGF1. The chain is Complement C1s subcomponent from Sus scrofa (Pig).